We begin with the raw amino-acid sequence, 426 residues long: Enolase (426 aa).

G41 is a phosphoenolpyruvate binding site. Mg(2+) is bound at residue S43. E165 serves as a coordination point for phosphoenolpyruvate. E165 and E206 together coordinate (2R)-2-phosphoglycerate. The active-site Proton donor is E206. 3 residues coordinate Mg(2+): D243, E286, and D313. Residues D313, K338, R367, S368, and K389 each coordinate phosphoenolpyruvate. 3 residues coordinate (2R)-2-phosphoglycerate: K338, R367, and S368. Catalysis depends on K338, which acts as the Proton acceptor.

Belongs to the enolase family. In terms of assembly, homodimer. It depends on Mg(2+) as a cofactor.

The protein localises to the cytoplasm. The protein resides in the secreted. It localises to the cell surface. It carries out the reaction (2R)-2-phosphoglycerate = phosphoenolpyruvate + H2O. It functions in the pathway carbohydrate degradation; glycolysis; pyruvate from D-glyceraldehyde 3-phosphate: step 4/5. Its function is as follows. Catalyzes the reversible conversion of 2-phosphoglycerate (2-PG) into phosphoenolpyruvate (PEP). It is essential for the degradation of carbohydrates via glycolysis. The protein is Enolase of Chloroflexus aurantiacus (strain ATCC 29366 / DSM 635 / J-10-fl).